A 448-amino-acid polypeptide reads, in one-letter code: Probable tryptophanase (448 aa).

Lys253 bears the N6-(pyridoxal phosphate)lysine mark.

Belongs to the beta-eliminating lyase family. Requires pyridoxal 5'-phosphate as cofactor.

The enzyme catalyses L-tryptophan + H2O = indole + pyruvate + NH4(+). The protein operates within amino-acid degradation; L-tryptophan degradation via pyruvate pathway; indole and pyruvate from L-tryptophan: step 1/1. The chain is Probable tryptophanase from Halobacterium salinarum (strain ATCC 29341 / DSM 671 / R1).